Here is an 819-residue protein sequence, read N- to C-terminus: Probable beta-glucosidase G (819 aa).

The N-terminal stretch at 1–20 (MTSASQILVWGLLAASGAQA) is a signal peptide. Residues N41, N59, N107, N228, and N277 are each glycosylated (N-linked (GlcNAc...) asparagine). D305 is a catalytic residue. Residues N337, N344, N351, N403, N500, N509, N554, N567, N588, N627, N683, and N719 are each glycosylated (N-linked (GlcNAc...) asparagine).

This sequence belongs to the glycosyl hydrolase 3 family.

The protein localises to the secreted. It catalyses the reaction Hydrolysis of terminal, non-reducing beta-D-glucosyl residues with release of beta-D-glucose.. It functions in the pathway glycan metabolism; cellulose degradation. Functionally, beta-glucosidases are one of a number of cellulolytic enzymes involved in the degradation of cellulosic biomass. Catalyzes the last step releasing glucose from the inhibitory cellobiose. The polypeptide is Probable beta-glucosidase G (bglG) (Emericella nidulans (strain FGSC A4 / ATCC 38163 / CBS 112.46 / NRRL 194 / M139) (Aspergillus nidulans)).